A 1174-amino-acid chain; its full sequence is Ribonucleoside-diphosphate reductase large subunit-like protein (1174 aa).

Positions 50–72 match the RIP homotypic interaction motif (RHIM) motif; the sequence is PYVRIMNGVSGIQIGNHNAMSIA. 2 disordered regions span residues 170 to 269 and 291 to 325; these read ASNA…KLKP and AAAAVAPESESSPAASAPPAAAAMATGGDDEDQSS. Low complexity-rich tracts occupy residues 182-202, 233-243, and 291-316; these read ATSGAGSAAATPAATTPAATA, HVSVGTQATPS, and AAAAVAPESESSPAASAPPAAAAMAT.

It belongs to the ribonucleoside diphosphate reductase large chain family. Self-assembles into homo-oligomeric amyloid fibrils. Interacts with host RIPK1 (via RIP homotypic interaction motif); this interaction inhibits RIPK1 ubiquitination thereby preventing effective activation of host NF-kappa-B. Interacts with host RIPK3 (via RIP homotypic interaction motif); this interaction disrupts RIPK3-RIPK1 interactions characteristic of TNF-alpha induced necroptosis, thereby suppressing this death pathway. Interacts (via RIP homotypic interaction motif) with host ZBP1 (via RIP homotypic interaction motif); this interaction inhibits recruitment of RIPK1 and RIPK3 to ZBP1 and prevents ZBP1-induced NF-kappa-B activation. Post-translationally, undergoes proteolytic cleavage, generating two peptides, a N-terminal and a 116 kDa. The N-terminal peptide retains RIPK1- and RIPK3-binding activity as well as cell death suppression activity.

It is found in the virion. The protein resides in the host cytoplasm. Its function is as follows. Provides optimal viral replication conditions by promoting host cell survival and avoiding the host inflammatory response linked to NF-kappa-B activation. Blocks RIPK1 ubiquitination, thereby preventing NF-kappa-B activation and virally induced inflammatory response. Prevents host necroptosis by targeting RIPK3 thereby preventing the formation of necroptotic RIPK1-RIPK3 complexes. Also inhibits ZBP1-induced necroptosis. Does not have ribonucleotide reductase activity. Betaherpesviruses probably use another strategy to expand the dNTP pool in a quiescent host cell. The chain is Ribonucleoside-diphosphate reductase large subunit-like protein from Murid herpesvirus 1 (strain Smith) (MuHV-1).